The following is a 287-amino-acid chain: Acetylglutamate kinase (287 aa).

Substrate-binding positions include 65–66, arginine 87, and asparagine 181; that span reads GG.

This sequence belongs to the acetylglutamate kinase family. ArgB subfamily.

It is found in the cytoplasm. The catalysed reaction is N-acetyl-L-glutamate + ATP = N-acetyl-L-glutamyl 5-phosphate + ADP. Its pathway is amino-acid biosynthesis; L-arginine biosynthesis; N(2)-acetyl-L-ornithine from L-glutamate: step 2/4. Catalyzes the ATP-dependent phosphorylation of N-acetyl-L-glutamate. In Syntrophomonas wolfei subsp. wolfei (strain DSM 2245B / Goettingen), this protein is Acetylglutamate kinase.